The following is a 642-amino-acid chain: Mini-chromosome maintenance complex-binding protein (642 aa).

Over residues 151–161 (ARVSPSTSYTP) the composition is skewed to polar residues. Residues 151 to 200 (ARVSPSTSYTPSRHKRSYEDDEDMDLQPNKQKDQHSGARQAGGLGGLHWR) form a disordered region. Ser154 bears the Phosphoserine mark. Position 160 is a phosphothreonine (Thr160). Residues Ser167 and Ser298 each carry the phosphoserine modification.

This sequence belongs to the MCMBP family. Interacts with the MCM complex: associates with the MCM3-7 complex which lacks MCM2, while it does not interact with the MCM complex when MCM2 is present (MCM2-7 complex). Interacts with the RPA complex, when composed of all RPA1, RPA2 and RPA3 components, but not with RPA1 or RPA2 alone.

The protein localises to the nucleus. Its function is as follows. Associated component of the MCM complex that acts as a regulator of DNA replication. Binds to the MCM complex during late S phase and promotes the disassembly of the MCM complex from chromatin, thereby acting as a key regulator of pre-replication complex (pre-RC) unloading from replicated DNA. Can dissociate the MCM complex without addition of ATP; probably acts by destabilizing interactions of each individual subunits of the MCM complex. Required for sister chromatid cohesion. This is Mini-chromosome maintenance complex-binding protein (Mcmbp) from Rattus norvegicus (Rat).